The chain runs to 3326 residues: Deoxyribonuclease CdiA (3326 aa).

Positions 36-342 (TADGVLTSGG…ARGALTLTGS (307 aa)) are two-partner system transport domain (TPS). The FHA-1 stretch occupies residues 343 to 1396 (YAGAGSLYSD…ITVRTGTLTN (1054 aa)). The tract at residues 1397–1765 (QREGLVVTES…QQLGSPSLTD (369 aa)) is receptor binding domain (RBD). The segment at 1766 to 1951 (YPLPTSQSGL…LAQADKTNLQ (186 aa)) is YP domain. The tract at residues 1959-2097 (SVSLSAGGDI…AGGPLQLAAG (139 aa)) is periplasmic FHA-1 repeat (pFR). The FHA-2 stretch occupies residues 2125-2660 (QGLVQSTVAS…SNRYDSKQTS (536 aa)). The VENN CT cleavage motif signature appears at 3060–3063 (VENN). Residues 3060–3326 (VENNSLGDIA…DRNRQIGVIK (267 aa)) are CT domain.

The protein in the N-terminal section; belongs to the CdiA toxin family. The C-terminal (CT) domain interacts with cognate CdiI but not non-cognate CdiI from E.coli strain 536 / UPEC.

It localises to the target cell. It is found in the target cell cytoplasm. Toxic component of a toxin-immunity protein module, which functions as a cellular contact-dependent growth inhibition (CDI) system. CDI modules allow bacteria to communicate with and inhibit the growth of closely related neighboring bacteria in a contact-dependent fashion. CDI is neutralized by its cognate immunity protein CdiI, but not by non-cognate CdiI from other bacteria. The C-terminal domain (CT) has strong DNase activity; this activity is inhibited by cognate CdiI. Functionally, the CdiA protein is thought to be exported from the cell through the central lumen of CdiB, the other half of its two-partner system (TPS). The TPS domain probably remains associated with CdiB while the FHA-1 domain forms an extended filament with the receptor-binding domain (RBD) at its extremity; in the secretion arrested state the C-terminus of the RBD and YP domains form a hairpin-like structure as the FHA-2, PT and CT domains are periplasmic. The YP domain is probably responsible for this arrest at the point where it re-enters the host cell periplasm. Upon binding to a target cell outer membrane receptor a signal is transmitted to activate secretion. The filament elongates slightly, the rest of CdiA is secreted and the FHA-2 domain becomes stably associated with the target cell's outer membrane where it facilitates entry of the toxic CT domain into the target cell periplasm. From there the toxic CT domain is cleaved and gains access to the target cell cytoplasm via an inner membrane protein. The protein is Deoxyribonuclease CdiA of Dickeya dadantii (strain 3937) (Erwinia chrysanthemi (strain 3937)).